The sequence spans 224 residues: Ribonuclease HII (224 aa).

The region spanning 36–224 (RGVAGVDEVG…RRSFLRRFLG (189 aa)) is the RNase H type-2 domain. A divalent metal cation-binding residues include D42, E43, and D138.

It belongs to the RNase HII family. Mn(2+) serves as cofactor. Requires Mg(2+) as cofactor.

The protein localises to the cytoplasm. It carries out the reaction Endonucleolytic cleavage to 5'-phosphomonoester.. Endonuclease that specifically degrades the RNA of RNA-DNA hybrids. The protein is Ribonuclease HII of Parasynechococcus marenigrum (strain WH8102).